A 99-amino-acid chain; its full sequence is Integration host factor subunit alpha (99 aa).

Belongs to the bacterial histone-like protein family. In terms of assembly, heterodimer of an alpha and a beta chain.

This protein is one of the two subunits of integration host factor, a specific DNA-binding protein that functions in genetic recombination as well as in transcriptional and translational control. In Enterobacter sp. (strain 638), this protein is Integration host factor subunit alpha.